The chain runs to 235 residues: Phosphoribosylaminoimidazole-succinocarboxamide synthase (235 aa).

The protein belongs to the SAICAR synthetase family.

The catalysed reaction is 5-amino-1-(5-phospho-D-ribosyl)imidazole-4-carboxylate + L-aspartate + ATP = (2S)-2-[5-amino-1-(5-phospho-beta-D-ribosyl)imidazole-4-carboxamido]succinate + ADP + phosphate + 2 H(+). It functions in the pathway purine metabolism; IMP biosynthesis via de novo pathway; 5-amino-1-(5-phospho-D-ribosyl)imidazole-4-carboxamide from 5-amino-1-(5-phospho-D-ribosyl)imidazole-4-carboxylate: step 1/2. In Clostridium kluyveri (strain NBRC 12016), this protein is Phosphoribosylaminoimidazole-succinocarboxamide synthase.